A 33-amino-acid polypeptide reads, in one-letter code: Toxin Bcg III 25.52 (33 aa).

C6 and C28 form a disulfide bridge.

The protein resides in the secreted. Its subcellular location is the nematocyst. The polypeptide is Toxin Bcg III 25.52 (Bunodosoma cangicum (Sea anemone)).